An 874-amino-acid chain; its full sequence is Alanine--tRNA ligase (874 aa).

4 residues coordinate Zn(2+): histidine 564, histidine 568, cysteine 666, and histidine 670.

It belongs to the class-II aminoacyl-tRNA synthetase family. Requires Zn(2+) as cofactor.

The protein localises to the cytoplasm. The catalysed reaction is tRNA(Ala) + L-alanine + ATP = L-alanyl-tRNA(Ala) + AMP + diphosphate. In terms of biological role, catalyzes the attachment of alanine to tRNA(Ala) in a two-step reaction: alanine is first activated by ATP to form Ala-AMP and then transferred to the acceptor end of tRNA(Ala). Also edits incorrectly charged Ser-tRNA(Ala) and Gly-tRNA(Ala) via its editing domain. The chain is Alanine--tRNA ligase from Carboxydothermus hydrogenoformans (strain ATCC BAA-161 / DSM 6008 / Z-2901).